Consider the following 481-residue polypeptide: Innexin inx6 (481 aa).

Topologically, residues 1-21 (MYAAVKPLSNYLRLKTVRIYD) are cytoplasmic. A helical transmembrane segment spans residues 22 to 42 (PIFTLHSKCTIVILLTCTFLL). Residues 43–144 (SAKQYFGEPI…VTKRMYLRYY (102 aa)) lie on the Extracellular side of the membrane. Residues 145–165 (QWVFMILLFQSLLFYFPSFLW) form a helical membrane-spanning segment. The Cytoplasmic segment spans residues 166–220 (KVWEGQRMEQLCCEVGDALIVEATYRTRLQMLTRYFRAQFAPIHWCYSIKYAFCE). The chain crosses the membrane as a helical span at residues 221-241 (LLNVFISILNFWLMDVVFNGF). At 242 to 302 (WYKYIHALAA…VLPLNILNEK (61 aa)) the chain is on the extracellular side. The chain crosses the membrane as a helical span at residues 303 to 323 (IFAVLYVWFLFIALLAIMNIL). Residues 324–481 (YRLLVICCPE…MDRFFHESHA (158 aa)) are Cytoplasmic-facing.

Belongs to the pannexin family. As to expression, uniform expression in the imaginal wing disk. Expressed in an outer layer of the pupal developing CNS. Also expressed in pupal retina: cone cells and primary pigment cells.

The protein localises to the cell membrane. It localises to the cell junction. The protein resides in the gap junction. In terms of biological role, structural components of the gap junctions. The chain is Innexin inx6 (Inx6) from Drosophila melanogaster (Fruit fly).